We begin with the raw amino-acid sequence, 383 residues long: Chaperone protein DnaJ (383 aa).

The region spanning 6–70 (DYYDVLGVGR…QKRAAYDQYG (65 aa)) is the J domain. The segment at 140–222 (GKETKISYSR…CHGTGREEER (83 aa)) adopts a CR-type zinc-finger fold. Zn(2+) contacts are provided by C153, C156, C170, C173, C196, C199, C210, and C213. 4 CXXCXGXG motif repeats span residues 153 to 160 (CHTCHGSG), 170 to 177 (CHKCHGAG), 196 to 203 (CDVCGGTG), and 210 to 217 (CDTCHGTG).

It belongs to the DnaJ family. In terms of assembly, homodimer. Zn(2+) is required as a cofactor.

Its subcellular location is the cytoplasm. Participates actively in the response to hyperosmotic and heat shock by preventing the aggregation of stress-denatured proteins and by disaggregating proteins, also in an autonomous, DnaK-independent fashion. Unfolded proteins bind initially to DnaJ; upon interaction with the DnaJ-bound protein, DnaK hydrolyzes its bound ATP, resulting in the formation of a stable complex. GrpE releases ADP from DnaK; ATP binding to DnaK triggers the release of the substrate protein, thus completing the reaction cycle. Several rounds of ATP-dependent interactions between DnaJ, DnaK and GrpE are required for fully efficient folding. Also involved, together with DnaK and GrpE, in the DNA replication of plasmids through activation of initiation proteins. The polypeptide is Chaperone protein DnaJ (Latilactobacillus sakei (Lactobacillus sakei)).